The primary structure comprises 754 residues: MTILTHTLGFPRVGLRRELKKAQESYWAGNTTREALLAVGRELRARHWEQQKQAGIDLLPVGDFAWYDHVLTTSLLLGNVPARHQNNDGSVDIDTLFRIGRGRAPTGEPAAAAEMTKWFNTNYHYIVPEFSKGQQFRLTWTQLLEEVDEALALGHKIKPVLLGPVTYLWLGKVKGEPFDRLTLLKDILPVYQHVLAELAKRGVEWVQIDEPALVLELPQAWLDAFKPAYDALAGQVKLLLTTYFEGVTPNLDTIIVLPVQGLHVDLIHGKDDVVELHQRLPVDWLLSAGLINGRNVWRADLTEKYAQINAIVGKRALWVASSCSLLHSPIDLSVETRLDTEVKSWFAFALQKCGELALLRDALNSGETAALEEWSVPIQARRHSHRVHNAAVEKRLAAITAQDSQRENPYEVRAEAQRARFKLPAWPTTTIGSFPQTTEIRGLRLDFKKGNLDANNYRTGIAEHIKQAIIEQERLGLDVLVHGEAERNDMVEYFGEHLDGFVFTQNGWVQSYGSRCVKPPVVIGDISRPAPITVEWAKYAQSLTDKPVKGMLTGPVTILCWSFPREDVTRETIAKQIALALRDEVADLEAAGIGIIQIDEPALREGLPLRRSDWDAYLEWGVEAFRINAAVAKDETQIHTHMCYCEFNDIMDSIAALDADVITIETSRSDMELLESFEAFDYPNEIGPGVYDIHSPNVPSVEWIEALLKKAAQRIPAQRLWVNPDCGLKTRGWPETRAALANMVKAAHNLRQAK.

Residues 17–20 (RELK) and Lys-117 contribute to the 5-methyltetrahydropteroyltri-L-glutamate site. L-homocysteine is bound by residues 431 to 433 (IGS) and Glu-484. Residues 431–433 (IGS) and Glu-484 each bind L-methionine. 5-methyltetrahydropteroyltri-L-glutamate contacts are provided by residues 515–516 (RC) and Trp-561. L-homocysteine is bound at residue Asp-599. Asp-599 provides a ligand contact to L-methionine. Glu-605 serves as a coordination point for 5-methyltetrahydropteroyltri-L-glutamate. His-641, Cys-643, and Glu-665 together coordinate Zn(2+). The active-site Proton donor is the His-694. Position 726 (Cys-726) interacts with Zn(2+).

It belongs to the vitamin-B12 independent methionine synthase family. Zn(2+) serves as cofactor.

The catalysed reaction is 5-methyltetrahydropteroyltri-L-glutamate + L-homocysteine = tetrahydropteroyltri-L-glutamate + L-methionine. The protein operates within amino-acid biosynthesis; L-methionine biosynthesis via de novo pathway; L-methionine from L-homocysteine (MetE route): step 1/1. In terms of biological role, catalyzes the transfer of a methyl group from 5-methyltetrahydrofolate to homocysteine resulting in methionine formation. This is 5-methyltetrahydropteroyltriglutamate--homocysteine methyltransferase from Salmonella typhi.